The chain runs to 141 residues: Large ribosomal subunit protein uL11 (141 aa).

It belongs to the universal ribosomal protein uL11 family. As to quaternary structure, part of the ribosomal stalk of the 50S ribosomal subunit. Interacts with L10 and the large rRNA to form the base of the stalk. L10 forms an elongated spine to which L12 dimers bind in a sequential fashion forming a multimeric L10(L12)X complex. Post-translationally, one or more lysine residues are methylated.

Forms part of the ribosomal stalk which helps the ribosome interact with GTP-bound translation factors. In Lactobacillus acidophilus (strain ATCC 700396 / NCK56 / N2 / NCFM), this protein is Large ribosomal subunit protein uL11.